Reading from the N-terminus, the 692-residue chain is Eomesodermin (692 aa).

Positions 35-135 (NSSTPNLPHT…LNTAVPTSAP (101 aa)) are disordered. A DNA-binding region (T-box) is located at residues 263 to 443 (LWLKFHRHQT…HNPFAKGFRD (181 aa)). The interval 578-692 (SMAGWGSRGS…LGYYSFYSSS (115 aa)) is required for transcription activation. Disordered stretches follow at residues 595-614 (TSLP…DLLP) and 621-673 (EMSS…DIGT). 2 stretches are compositionally biased toward low complexity: residues 596-609 (SLPW…SGFS) and 654-665 (SPSTSSNENSPP).

The protein localises to the nucleus. Functions as a transcriptional activator playing a crucial role during development. Functions in gastrulation, regulating mesoderm differentiation. Activates wnt8, t/bra, chrd and mix-A/mix.1 expression. The polypeptide is Eomesodermin (eomes) (Xenopus laevis (African clawed frog)).